Here is a 381-residue protein sequence, read N- to C-terminus: Lipid-A-disaccharide synthase (381 aa).

This sequence belongs to the LpxB family.

It carries out the reaction a lipid X + a UDP-2-N,3-O-bis[(3R)-3-hydroxyacyl]-alpha-D-glucosamine = a lipid A disaccharide + UDP + H(+). Its pathway is bacterial outer membrane biogenesis; LPS lipid A biosynthesis. In terms of biological role, condensation of UDP-2,3-diacylglucosamine and 2,3-diacylglucosamine-1-phosphate to form lipid A disaccharide, a precursor of lipid A, a phosphorylated glycolipid that anchors the lipopolysaccharide to the outer membrane of the cell. The chain is Lipid-A-disaccharide synthase from Psychromonas ingrahamii (strain DSM 17664 / CCUG 51855 / 37).